The chain runs to 262 residues: 3-methyl-2-oxobutanoate hydroxymethyltransferase (262 aa).

2 residues coordinate Mg(2+): D44 and D83. Residues 44–45 (DS), D83, and K113 each bind 3-methyl-2-oxobutanoate. Mg(2+) is bound at residue E115. The Proton acceptor role is filled by E182.

The protein belongs to the PanB family. Homodecamer; pentamer of dimers. Requires Mg(2+) as cofactor.

The protein localises to the cytoplasm. The catalysed reaction is 3-methyl-2-oxobutanoate + (6R)-5,10-methylene-5,6,7,8-tetrahydrofolate + H2O = 2-dehydropantoate + (6S)-5,6,7,8-tetrahydrofolate. Its pathway is cofactor biosynthesis; (R)-pantothenate biosynthesis; (R)-pantoate from 3-methyl-2-oxobutanoate: step 1/2. In terms of biological role, catalyzes the reversible reaction in which hydroxymethyl group from 5,10-methylenetetrahydrofolate is transferred onto alpha-ketoisovalerate to form ketopantoate. The sequence is that of 3-methyl-2-oxobutanoate hydroxymethyltransferase from Picosynechococcus sp. (strain ATCC 27264 / PCC 7002 / PR-6) (Agmenellum quadruplicatum).